The primary structure comprises 295 residues: uncharacterized protein (295 aa).

Residues 1–19 (MRKLLLIITVFFTFNVAQA) form the signal peptide.

This is an uncharacterized protein from Rickettsia conorii (strain ATCC VR-613 / Malish 7).